A 189-amino-acid polypeptide reads, in one-letter code: Peptidyl-tRNA hydrolase (189 aa).

Tyr15 is a tRNA binding site. His20 acts as the Proton acceptor in catalysis. The tRNA site is built by Phe66, Asn68, and Asn114.

This sequence belongs to the PTH family. As to quaternary structure, monomer.

It localises to the cytoplasm. It catalyses the reaction an N-acyl-L-alpha-aminoacyl-tRNA + H2O = an N-acyl-L-amino acid + a tRNA + H(+). Its function is as follows. Hydrolyzes ribosome-free peptidyl-tRNAs (with 1 or more amino acids incorporated), which drop off the ribosome during protein synthesis, or as a result of ribosome stalling. Catalyzes the release of premature peptidyl moieties from peptidyl-tRNA molecules trapped in stalled 50S ribosomal subunits, and thus maintains levels of free tRNAs and 50S ribosomes. The sequence is that of Peptidyl-tRNA hydrolase from Streptococcus pneumoniae serotype 2 (strain D39 / NCTC 7466).